A 320-amino-acid polypeptide reads, in one-letter code: Olfactory receptor 51E2 (320 aa).

The Extracellular portion of the chain corresponds to 1 to 27 (MSSCNFTHATFLLIGIPGLEEAHFWFG). Asn5 carries N-linked (GlcNAc...) asparagine glycosylation. The helical transmembrane segment at 28–48 (FPLLSMYAVALFGNCIVVFIV) threads the bilayer. At 49–53 (RTERS) the chain is on the cytoplasmic side. Residues 54-74 (LHAPMYLFLCMLAAIDLALST) form a helical membrane-spanning segment. Over 75-98 (STMPKILALFWFDSREITFDACLA) the chain is Extracellular. A disulfide bond links Cys96 and Cys178. A helical transmembrane segment spans residues 99-119 (QMFFIHTLSAIESTILLAMAF). The Cytoplasmic portion of the chain corresponds to 120 to 141 (DRYVAICHPLRHAAVLNNTVTV). A helical membrane pass occupies residues 142–162 (QIGMVALVRGSLFFFPLPLLI). Residues 163 to 200 (KRLAFCHSNVLSHSYCVHQDVMKLAYTDTLPNVVYGLT) lie on the Extracellular side of the membrane. Residues 201–221 (AILLVMGVDVMFISLSYFLII) traverse the membrane as a helical segment. The Cytoplasmic segment spans residues 222-239 (RTVLQLPSKSERAKAFGT). Residues 240 to 260 (CVSHISVVLAFYVPLIGLSVV) form a helical membrane-spanning segment. At 261–269 (HRFGNSLDP) the chain is on the extracellular side. The chain crosses the membrane as a helical span at residues 270–290 (IVHVLMGDVYLLLPPVINPII). The Cytoplasmic segment spans residues 291–320 (YGAKTKQIRTRVLAMFKISCDKDIEAGGNT).

This sequence belongs to the G-protein coupled receptor 1 family. As to expression, in brain, expressed in medulla oblongata by cells close to the fourth ventricle, in the area postrema, the nucleus tractus solitarius. Expressed in olfactory epithelium and vomeronasal organ. Expressed in kidney by large renal vessels, renal afferent arterioles, and extrarenal vascular beds. In small resistance vessels the expression is restricted to cells of the juxtaglomerular afferent arteriole, which mediate renin secretion. Also detected in small blood vessels in a variety of tissues including heart, diaphragm, skeletal muscle, and skin. In the heart, esophagus, and stomach it is detected in axons of autonomic neurons and neurons of the enteric plexus. Also detected in colon and liver. Expressed in the glomus cells of the carotid body.

The protein localises to the cell membrane. It is found in the early endosome membrane. Its function is as follows. Olfactory receptor. The activity of this receptor is probably mediated by G-proteins which induce elevation of intracellular Ca(2+), cAMP and activation of phosphorylation of the protein kinases PKA and MAPK3/MAPK1. Activation of OR51E2 may affect melanocyte proliferation, differentiation, and melanogenesis and may increase proliferation and migration of primary retinal pigment epithelial (RPE) cells. Activated by the short chain fatty acids (SCFA), acetate and propionate. In response to SCFA, may positively regulate renin secretion and increase blood pressure. May also be activated by steroid hormones and regulate cell proliferation. Activated by L-lactate in glomus cells. The polypeptide is Olfactory receptor 51E2 (Or51e2) (Mus musculus (Mouse)).